The sequence spans 464 residues: MLATRRLLGWSLPARVSVRFSGDTTAPKKTSFGSLKDEDRIFTNLYGRHDWRLKGSLSRGDWYKTKEILLKGPDWILGEIKTSGLRGRGGAGFPTGLKWSFMNKPSDGRPKYLVVNADEGEPGTCKDREILRHDPHKLLEGCLVGGRAMGARAAYIYIRGEFYNEASNLQVAIREAYEAGLIGKNACGSGYDFDVFVVRGAGAYICGEETALIESIEGKQGKPRLKPPFPADVGVFGCPTTVANVETVAVSPTICRRGGTWFAGFGRERNSGTKLFNISGHVNHPCTVEEEMSVPLKELIEKHAGGVTGGWDNLLAVIPGGSSTPLIPKSVCETVLMDFDALVQAQTGLGTAAVIVMDRSTDIVKAIARLIEFYKHESCGQCTPCREGVDWMNKVMARFVRGDARPAEIDSLWEISKQIEGHTICALGDGAAWPVQGLIRHFRPELEERMQRFAQQHQARQAAS.

The transit peptide at 1–20 (MLATRRLLGWSLPARVSVRF) directs the protein to the mitochondrion. Lys81 is subject to N6-acetyllysine; alternate. An N6-succinyllysine; alternate modification is found at Lys81. 87–96 (GRGGAGFPTG) contributes to the NADH binding site. Residue Lys104 is modified to N6-acetyllysine. 199–247 (RGAGAYICGEETALIESIEGKQGKPRLKPPFPADVGVFGCPTTVANVET) lines the FMN pocket. At Arg257 the chain carries Omega-N-methylarginine. Lys375 carries the post-translational modification N6-acetyllysine. [4Fe-4S] cluster-binding residues include Cys379, Cys382, Cys385, and Cys425.

This sequence belongs to the complex I 51 kDa subunit family. In terms of assembly, core subunit of respiratory chain NADH dehydrogenase (Complex I) which is composed of 45 different subunits. This is a component of the flavoprotein-sulfur (FP) fragment of the enzyme. Interacts with RAB5IF. The cofactor is FMN. It depends on [4Fe-4S] cluster as a cofactor.

It is found in the mitochondrion inner membrane. It carries out the reaction a ubiquinone + NADH + 5 H(+)(in) = a ubiquinol + NAD(+) + 4 H(+)(out). In terms of biological role, core subunit of the mitochondrial membrane respiratory chain NADH dehydrogenase (Complex I) which catalyzes electron transfer from NADH through the respiratory chain, using ubiquinone as an electron acceptor. Part of the peripheral arm of the enzyme, where the electrons from NADH are accepted by flavin mononucleotide (FMN) and then passed along a chain of iron-sulfur clusters by electron tunnelling to the final acceptor ubiquinone. Contains FMN, which is the initial electron acceptor as well as one iron-sulfur cluster. The polypeptide is NADH dehydrogenase [ubiquinone] flavoprotein 1, mitochondrial (Homo sapiens (Human)).